Consider the following 118-residue polypeptide: Small ribosomal subunit protein uS13 (118 aa).

Positions 91–118 are disordered; that stretch reads HRRSLPLRGQRTKNNARTRKGPKKPIKR.

It belongs to the universal ribosomal protein uS13 family. Part of the 30S ribosomal subunit. Forms a loose heterodimer with protein S19. Forms two bridges to the 50S subunit in the 70S ribosome.

Located at the top of the head of the 30S subunit, it contacts several helices of the 16S rRNA. In the 70S ribosome it contacts the 23S rRNA (bridge B1a) and protein L5 of the 50S subunit (bridge B1b), connecting the 2 subunits; these bridges are implicated in subunit movement. Contacts the tRNAs in the A and P-sites. This is Small ribosomal subunit protein uS13 from Hydrogenovibrio crunogenus (strain DSM 25203 / XCL-2) (Thiomicrospira crunogena).